A 121-amino-acid polypeptide reads, in one-letter code: Basic phospholipase A2 VRV-PL-V (121 aa).

7 cysteine pairs are disulfide-bonded: cysteine 26–cysteine 115, cysteine 28–cysteine 44, cysteine 43–cysteine 95, cysteine 49–cysteine 121, cysteine 50–cysteine 88, cysteine 57–cysteine 81, and cysteine 75–cysteine 86. Ca(2+)-binding residues include tyrosine 27, glycine 29, and glycine 31. The active site involves histidine 47. Aspartate 48 contacts Ca(2+). The active site involves aspartate 89.

Belongs to the phospholipase A2 family. Group II subfamily. D49 sub-subfamily. Monomer. Ca(2+) serves as cofactor. In terms of tissue distribution, expressed by the venom gland.

The protein resides in the secreted. It catalyses the reaction a 1,2-diacyl-sn-glycero-3-phosphocholine + H2O = a 1-acyl-sn-glycero-3-phosphocholine + a fatty acid + H(+). In terms of biological role, snake venom phospholipase A2 (PLA2) that has a low enzymatic activity. PLA2 catalyzes the calcium-dependent hydrolysis of the 2-acyl groups in 3-sn-phosphoglycerides. This chain is Basic phospholipase A2 VRV-PL-V, found in Daboia russelii (Russel's viper).